We begin with the raw amino-acid sequence, 257 residues long: Hydroxyacylglutathione hydrolase (257 aa).

Residues His54, His56, Asp58, His59, His113, Asp137, and His175 each coordinate Zn(2+).

It belongs to the metallo-beta-lactamase superfamily. Glyoxalase II family. In terms of assembly, monomer. Requires Zn(2+) as cofactor.

It catalyses the reaction an S-(2-hydroxyacyl)glutathione + H2O = a 2-hydroxy carboxylate + glutathione + H(+). The protein operates within secondary metabolite metabolism; methylglyoxal degradation; (R)-lactate from methylglyoxal: step 2/2. Functionally, thiolesterase that catalyzes the hydrolysis of S-D-lactoyl-glutathione to form glutathione and D-lactic acid. This chain is Hydroxyacylglutathione hydrolase, found in Synechocystis sp. (strain ATCC 27184 / PCC 6803 / Kazusa).